A 264-amino-acid chain; its full sequence is Phosphoinositide-3-kinase-interacting protein 1 (264 aa).

The N-terminal stretch at 1-21 is a signal peptide; the sequence is MLLAWVHTFLLSNMLLAEAYG. Residues 22–170 are Extracellular-facing; that stretch reads SGGCFWDNGH…SKEKKDLGTL (149 aa). In terms of domain architecture, Kringle spans 24–101; that stretch reads GCFWDNGHLY…EKRPCEDVSC (78 aa). Intrachain disulfides connect cysteine 25-cysteine 101, cysteine 46-cysteine 82, and cysteine 70-cysteine 96. The segment at 94–129 is disordered; it reads RPCEDVSCPETTSQAPPPSSAMELEEKSGAPGDKEA. Over residues 117 to 129 the composition is skewed to basic and acidic residues; the sequence is LEEKSGAPGDKEA. A helical transmembrane segment spans residues 171–191; that stretch reads GYVLGITMMVIILAIGAGIIV. The Cytoplasmic segment spans residues 192-264; it reads GYTYKRGKDL…LTGQAGTPGA (73 aa).

It is found in the cell membrane. Functionally, negative regulator of hepatic phosphatidylinositol 3-kinase (PI3K) activity. The sequence is that of Phosphoinositide-3-kinase-interacting protein 1 (Pik3ip1) from Mus musculus (Mouse).